A 41-amino-acid polypeptide reads, in one-letter code: Trypsin inhibitor 2c (41 aa).

2 disulfides stabilise this stretch: cysteine 11–cysteine 32 and cysteine 15–cysteine 28.

Its function is as follows. Inhibits bovine trypsin with a Ki of 0.174 nM and trypsin-like proteases from G.mellonella larvae. Has no activity against serine proteases chymotrypsin, subtilisin and elastase. Has no activity against cysteine proteases from beetle gut. The polypeptide is Trypsin inhibitor 2c (Fagopyrum esculentum (Common buckwheat)).